Reading from the N-terminus, the 344-residue chain is Heat-inducible transcription repressor HrcA (344 aa).

This sequence belongs to the HrcA family.

Its function is as follows. Negative regulator of class I heat shock genes (grpE-dnaK-dnaJ and groELS operons). Prevents heat-shock induction of these operons. This chain is Heat-inducible transcription repressor HrcA, found in Streptococcus equi subsp. zooepidemicus (strain H70).